The primary structure comprises 45 residues: Putative metallothionein-like protein 1B (45 aa).

It belongs to the metallothionein superfamily. Type 15 family.

In terms of biological role, metallothioneins have a high content of cysteine residues that bind various heavy metals. Confers tolerance to cadmium (Cd) and plays a role in Cd and zinc (Zn) homeostasis. The protein is Putative metallothionein-like protein 1B (MT1B) of Arabidopsis thaliana (Mouse-ear cress).